The chain runs to 635 residues: 1-deoxy-D-xylulose-5-phosphate synthase (635 aa).

Thiamine diphosphate-binding positions include His77 and 118–120 (GHA). Asp149 contributes to the Mg(2+) binding site. Thiamine diphosphate contacts are provided by residues 150-151 (GS), Asn178, Phe290, and Glu375. Residue Asn178 coordinates Mg(2+).

The protein belongs to the transketolase family. DXPS subfamily. Homodimer. Mg(2+) is required as a cofactor. It depends on thiamine diphosphate as a cofactor.

It catalyses the reaction D-glyceraldehyde 3-phosphate + pyruvate + H(+) = 1-deoxy-D-xylulose 5-phosphate + CO2. Its pathway is metabolic intermediate biosynthesis; 1-deoxy-D-xylulose 5-phosphate biosynthesis; 1-deoxy-D-xylulose 5-phosphate from D-glyceraldehyde 3-phosphate and pyruvate: step 1/1. Its function is as follows. Catalyzes the acyloin condensation reaction between C atoms 2 and 3 of pyruvate and glyceraldehyde 3-phosphate to yield 1-deoxy-D-xylulose-5-phosphate (DXP). This is 1-deoxy-D-xylulose-5-phosphate synthase from Chlorobium phaeovibrioides (strain DSM 265 / 1930) (Prosthecochloris vibrioformis (strain DSM 265)).